Consider the following 1033-residue polypeptide: Potassium-transporting ATPase alpha chain 1 (1033 aa).

The Cytoplasmic segment spans residues 1 to 96; it reads MGKENYELYS…NALRPPRGTP (96 aa). Tyr-6 and Tyr-9 each carry phosphotyrosine. Residues 14-39 are disordered; it reads GTGPGGDMAAKMSKKKAGGGGGKKKE. The span at 25-38 shows a compositional bias: basic residues; the sequence is MSKKKAGGGGGKKK. Phosphoserine is present on Ser-26. A helical membrane pass occupies residues 97 to 117; sequence EYVKFARQLAGGLQCLMWVAA. The Lumenal portion of the chain corresponds to 118–140; that stretch reads AICLIAFAIQASEGDLTTDDNLY. The helical transmembrane segment at 141 to 161 threads the bilayer; that stretch reads LALALIAVVVVTGCFGYYQEF. At 162-297 the chain is on the cytoplasmic side; that stretch reads KSTNIIASFK…NEKTPIAIEI (136 aa). Residues 298–317 form a helical membrane-spanning segment; the sequence is EHFVDIIAGLAILFGATFFV. The Lumenal segment spans residues 318-329; sequence VAMCIGYTFLRA. The helical transmembrane segment at 330–347 threads the bilayer; the sequence is MVFFMAIVVAYVPEGLLA. Positions 338, 339, 341, and 343 each coordinate K(+). The Cytoplasmic portion of the chain corresponds to 348 to 781; it reads TVTVCLSLTA…EQGRLIFDNL (434 aa). Asp-385 serves as the catalytic 4-aspartylphosphate intermediate. The Mg(2+) site is built by Asp-385 and Thr-387. Phosphoserine occurs at positions 461 and 599. Mg(2+)-binding residues include Asp-726 and Asp-730. A helical transmembrane segment spans residues 782 to 801; that stretch reads KKSIAYTLTKNIPELTPYLI. Glu-795 contacts K(+). The Lumenal segment spans residues 802–811; it reads YITVSVPLPL. A helical transmembrane segment spans residues 812 to 832; it reads GCITILFIELCTDIFPSVSLA. Glu-820 provides a ligand contact to K(+). Residues 833-852 lie on the Cytoplasmic side of the membrane; sequence YEKAESDIMHLRPRNPRRDR. The residue at position 838 (Ser-838) is a Phosphoserine. A helical membrane pass occupies residues 853–875; the sequence is LVNEPLAAYSYFQIGAIQSFAGF. The Lumenal segment spans residues 876 to 927; that stretch reads ADYFTAMAQEGWFPLLCVGLRPQWEDHHLQDLQDSYGQEWTFGQRLYQQYTC. Residues 928–947 traverse the membrane as a helical segment; that stretch reads YTVFFISIEMCQIADVLIRK. The Cytoplasmic segment spans residues 948–961; that stretch reads TRRLSAFQQGFFRN. Residue Ser-952 is modified to Phosphoserine; by PKA. Residues 962 to 980 traverse the membrane as a helical segment; that stretch reads RILVIAIVFQVCIGCFLCY. At 981 to 995 the chain is on the lumenal side; the sequence is CPGMPNIFNFMPIRF. The helical transmembrane segment at 996-1016 threads the bilayer; the sequence is QWWLVPMPFGLLIFVYDEIRK. Topologically, residues 1017-1033 are cytoplasmic; that stretch reads LGVRCCPGSWWDQELYY.

It belongs to the cation transport ATPase (P-type) (TC 3.A.3) family. Type IIC subfamily. The gastric H(+)/K(+) ATPase pump is composed of the catalytic alpha subunit ATP4A and the regulatory beta subunit ATP4B. Interacts (via the P-domain) with ATP4B (via N-terminus); this interaction stabilizes the lumenal-open E2 conformation state and prevents the reverse reaction of the transport cycle.

It is found in the apical cell membrane. The enzyme catalyses K(+)(out) + ATP + H2O + H(+)(in) = K(+)(in) + ADP + phosphate + 2 H(+)(out). The catalytic subunit of the gastric H(+)/K(+) ATPase pump which transports H(+) ions in exchange for K(+) ions across the apical membrane of parietal cells. Uses ATP as an energy source to pump H(+) ions to the gastric lumen while transporting K(+) ion from the lumen into the cell. Remarkably generates a million-fold proton gradient across the gastric parietal cell membrane, acidifying the gastric juice down to pH 1. Within a transport cycle, the transfer of a H(+) ion across the membrane is coupled to ATP hydrolysis and is associated with a transient phosphorylation that shifts the pump conformation from inward-facing (E1) to outward-facing state (E2). The release of the H(+) ion in the stomach lumen is followed by binding of K(+) ion converting the pump conformation back to the E1 state. The protein is Potassium-transporting ATPase alpha chain 1 (Atp4a) of Rattus norvegicus (Rat).